The sequence spans 338 residues: DNA-directed RNA polymerase subunit alpha (338 aa).

An alpha N-terminal domain (alpha-NTD) region spans residues 1–234; sequence MIHKNWAELI…DQLSVFVNFD (234 aa). An alpha C-terminal domain (alpha-CTD) region spans residues 250-338; that stretch reads FDPRLLKKVD…DLAKRFDDQF (89 aa).

The protein belongs to the RNA polymerase alpha chain family. In terms of assembly, homodimer. The RNAP catalytic core consists of 2 alpha, 1 beta, 1 beta' and 1 omega subunit. When a sigma factor is associated with the core the holoenzyme is formed, which can initiate transcription.

The enzyme catalyses RNA(n) + a ribonucleoside 5'-triphosphate = RNA(n+1) + diphosphate. In terms of biological role, DNA-dependent RNA polymerase catalyzes the transcription of DNA into RNA using the four ribonucleoside triphosphates as substrates. The protein is DNA-directed RNA polymerase subunit alpha of Paracoccus denitrificans (strain Pd 1222).